Reading from the N-terminus, the 233-residue chain is Riboflavin kinase (233 aa).

A unknown region spans residues 1 to 99 (MSGATSTGDV…YRRIFEDPGE (99 aa)). A riboflavin kinase region spans residues 100-233 (LALAGTVTSG…DDEVTIRVEA (134 aa)). A CDP-binding site is contributed by 109 to 114 (GMGEGR). Residues Thr138 and Asn140 each coordinate Mg(2+). Residues Thr200 and Glu208 each coordinate FMN. 213-216 (VKLR) lines the CDP pocket.

The protein belongs to the archaeal riboflavin kinase family. Mg(2+) serves as cofactor.

It carries out the reaction riboflavin + CTP = CDP + FMN + H(+). Its pathway is cofactor biosynthesis; FMN biosynthesis; FMN from riboflavin (CTP route): step 1/1. Functionally, catalyzes the CTP-dependent phosphorylation of riboflavin (vitamin B2) to form flavin mononucleotide (FMN). This is Riboflavin kinase (ribK) from Halobacterium salinarum (strain ATCC 700922 / JCM 11081 / NRC-1) (Halobacterium halobium).